Here is a 263-residue protein sequence, read N- to C-terminus: Small ribosomal subunit protein bS1c (263 aa).

S1 motif domains lie at 27 to 96, 114 to 178, and 192 to 260; these read GDIV…LSIR, DSLL…LSHR, and GNII…LSMK.

The protein belongs to the bacterial ribosomal protein bS1 family.

The protein resides in the plastid. The protein localises to the chloroplast. This chain is Small ribosomal subunit protein bS1c (rps1), found in Pyropia yezoensis (Susabi-nori).